A 370-amino-acid polypeptide reads, in one-letter code: Divinyl chlorophyll a/b light-harvesting protein PcbD (370 aa).

Helical transmembrane passes span 27–47, 88–108, 140–160, 201–221, 248–268, and 315–335; these read FIASHIGHTGLIAFAAGGSTL, VAAVAIVHLVLSMVYGGGALL, FILGHHLFFFGMACIAFVEWA, VMGGHAFLAFAELTGATIHMV, AVLSWSLAGIGWMAIVAAFWA, and LVNVHYYFGFFFLQGHFWHAL.

It belongs to the PsbB/PsbC family. IsiA/Pcb subfamily. As to quaternary structure, the antenna complex consists of divinyl chlorophylls (a and b) and divinyl chlorophyll a/b binding proteins and binds more divinyl chlorophyll b than does the antenna complex from high-light-adapted Prochlorococcus. Requires divinyl chlorophyll a as cofactor. It depends on divinyl chlorophyll b as a cofactor.

It is found in the cellular thylakoid membrane. In terms of biological role, the antenna complex functions as a light receptor, it captures and delivers excitation energy to photosystems II and I. The Prochlorales pcb genes are not related to higher plant LHCs. This chain is Divinyl chlorophyll a/b light-harvesting protein PcbD (pcbD), found in Prochlorococcus marinus (strain NATL2A).